Consider the following 194-residue polypeptide: Fe/S biogenesis protein NfuA (194 aa).

The [4Fe-4S] cluster site is built by Cys151 and Cys154.

Belongs to the NfuA family. In terms of assembly, homodimer. Requires [4Fe-4S] cluster as cofactor.

In terms of biological role, involved in iron-sulfur cluster biogenesis. Binds a 4Fe-4S cluster, can transfer this cluster to apoproteins, and thereby intervenes in the maturation of Fe/S proteins. Could also act as a scaffold/chaperone for damaged Fe/S proteins. The chain is Fe/S biogenesis protein NfuA from Pasteurella multocida (strain Pm70).